The primary structure comprises 234 residues: Methylamine utilization ferredoxin-type protein MauM (234 aa).

4Fe-4S ferredoxin-type domains lie at 61–91 (ALAE…LASW), 98–131 (GTPF…PLLT), 140–176 (VAVL…LKPI), and 184–215 (QIPT…VLPR). Residues Cys-71, Cys-74, Cys-77, Cys-81, Cys-109, Cys-112, Cys-117, Cys-121, Cys-149, Cys-157, Cys-160, Cys-164, Cys-193, Cys-196, Cys-199, and Cys-203 each contribute to the [4Fe-4S] cluster site.

The protein operates within one-carbon metabolism; methylamine degradation. In terms of biological role, involved in electron transfer. This Methylobacillus flagellatus (strain ATCC 51484 / DSM 6875 / VKM B-1610 / KT) protein is Methylamine utilization ferredoxin-type protein MauM (mauM).